The primary structure comprises 321 residues: Probable arabinan endo-1,5-alpha-L-arabinosidase A (321 aa).

The first 19 residues, 1 to 19 (MHPSTFVTTIACLAGLAHG), serve as a signal peptide directing secretion. Catalysis depends on D34, which acts as the Proton acceptor. E200 (proton donor) is an active-site residue.

The protein belongs to the glycosyl hydrolase 43 family.

It localises to the secreted. The enzyme catalyses Endohydrolysis of (1-&gt;5)-alpha-arabinofuranosidic linkages in (1-&gt;5)-arabinans.. The protein operates within glycan metabolism; L-arabinan degradation. In terms of biological role, endo-1,5-alpha-L-arabinanase involved in degradation of pectin. Its preferred substrate is linear 1,5-alpha-L-arabinan. The protein is Probable arabinan endo-1,5-alpha-L-arabinosidase A (abnA) of Aspergillus clavatus (strain ATCC 1007 / CBS 513.65 / DSM 816 / NCTC 3887 / NRRL 1 / QM 1276 / 107).